Reading from the N-terminus, the 869-residue chain is Valine--tRNA ligase (869 aa).

A 'HIGH' region motif is present at residues 47-57 (PYPTGNFHIGN). The 'KMSKS' region motif lies at 521-525 (KMSKS). Lysine 524 contacts ATP.

This sequence belongs to the class-I aminoacyl-tRNA synthetase family. ValS type 2 subfamily.

The protein localises to the cytoplasm. The catalysed reaction is tRNA(Val) + L-valine + ATP = L-valyl-tRNA(Val) + AMP + diphosphate. Its function is as follows. Catalyzes the attachment of valine to tRNA(Val). As ValRS can inadvertently accommodate and process structurally similar amino acids such as threonine, to avoid such errors, it has a 'posttransfer' editing activity that hydrolyzes mischarged Thr-tRNA(Val) in a tRNA-dependent manner. The chain is Valine--tRNA ligase from Methanosarcina acetivorans (strain ATCC 35395 / DSM 2834 / JCM 12185 / C2A).